Consider the following 671-residue polypeptide: DNA ligase (671 aa).

Residues 32-36, 81-82, and Glu113 each bind NAD(+); these read DAEYD and SL. Lys115 (N6-AMP-lysine intermediate) is an active-site residue. Arg136, Glu173, Lys290, and Lys314 together coordinate NAD(+). Zn(2+) contacts are provided by Cys408, Cys411, Cys426, and Cys432. The BRCT domain maps to 593 to 671; the sequence is EIDSPFAGKT…EAEMLRLLGS (79 aa).

This sequence belongs to the NAD-dependent DNA ligase family. LigA subfamily. The cofactor is Mg(2+). Mn(2+) is required as a cofactor.

It carries out the reaction NAD(+) + (deoxyribonucleotide)n-3'-hydroxyl + 5'-phospho-(deoxyribonucleotide)m = (deoxyribonucleotide)n+m + AMP + beta-nicotinamide D-nucleotide.. Its function is as follows. DNA ligase that catalyzes the formation of phosphodiester linkages between 5'-phosphoryl and 3'-hydroxyl groups in double-stranded DNA using NAD as a coenzyme and as the energy source for the reaction. It is essential for DNA replication and repair of damaged DNA. This is DNA ligase from Shigella sonnei (strain Ss046).